The primary structure comprises 498 residues: ATP synthase subunit beta, chloroplastic (498 aa).

172–179 (GGAGVGKT) contacts ATP.

It belongs to the ATPase alpha/beta chains family. As to quaternary structure, F-type ATPases have 2 components, CF(1) - the catalytic core - and CF(0) - the membrane proton channel. CF(1) has five subunits: alpha(3), beta(3), gamma(1), delta(1), epsilon(1). CF(0) has four main subunits: a(1), b(1), b'(1) and c(9-12).

The protein resides in the plastid. It localises to the chloroplast thylakoid membrane. The enzyme catalyses ATP + H2O + 4 H(+)(in) = ADP + phosphate + 5 H(+)(out). Produces ATP from ADP in the presence of a proton gradient across the membrane. The catalytic sites are hosted primarily by the beta subunits. The sequence is that of ATP synthase subunit beta, chloroplastic from Solanum lycopersicum (Tomato).